Reading from the N-terminus, the 671-residue chain is Pescadillo homolog (671 aa).

One can recognise a BRCT domain in the interval 317 to 403; it reads KVRELFRGLT…LMLPVTGYRI (87 aa). A coiled-coil region spans residues 548 to 584; it reads QALRKAQEKSRQTETSEARLQRKMSEVKRQEAATRKM. Disordered stretches follow at residues 552-578 and 643-671; these read KAQEKSRQTETSEARLQRKMSEVKRQE and RRQRAEAKSKKLKERKAGNPYKKLPKWVQ.

The protein belongs to the pescadillo family.

The protein localises to the nucleus. Its subcellular location is the nucleolus. The protein resides in the nucleoplasm. Required for maturation of ribosomal RNAs and formation of the large ribosomal subunit. This is Pescadillo homolog from Leishmania infantum.